The primary structure comprises 642 residues: MSLLHTFWRLPVAVFFEPHEENVLRCPERVLRRLLEDAAVTMRGGGWREDVLMDRVRKRYLRQELRDLGHRVQTYCEDLEGRVSEAEALLNQQCELDEGPSPRTLLQPPCRPRSSSPGTGVAGASAVPHGLYSRHDAITGPAAAPSDVVAPSDAVAASAAAGASSTWLAQCAERPLPGNVPSYFGITQNDPFIRFHTDFRGEVVNTMFENASTWTFSFGIWYYRLKRGLYTQPRWKRVYHLAQMDNFSISQELLLGVVNALENVTVYPTYDCVLSDLEAAACLLAAYGHALWEGRDPPDSVATVLGELPQLLPRLADDVSREIAAWEGPVAAGNNYYAYRDSPDLRYYMPLSGGRHYHPGTFDRHVLVRLFHKRGVIQHLPGYGTITEELVQERLSGQVRDDVLSLWSRRLLVGKLGRDVPVFVHEQQYLRSGLTCLAGLLLLWKVTNADSVFAPRTGKFTLADLLGSDAVAGGGLPGGRAGGEEEGYGGRHGRVRNFEFLVRYYIGPWYARDPAVTLSQLFPGLALLAVTESVRSGWDPSRREDSAGGGDGGGAVLMQLSKSNPVADYMFAQSSKQYGDLRRLEVHDALLFHYEHGLGRLLSVTLPRHRVSTLGSSLFNVNDIYELLYFLVLGFLPSVAVL.

Residues 1–48 (MSLLHTFWRLPVAVFFEPHEENVLRCPERVLRRLLEDAAVTMRGGGWR) are interaction with major capsid protein/MCP. Residues 97 to 125 (DEGPSPRTLLQPPCRPRSSSPGTGVAGAS) are disordered.

Belongs to the herpesviridae CVC2 protein family. As to quaternary structure, heterodimerizes with CVC1. Interacts with major capsid protein/MCP and triplex capsid protein 1/TRX1 at the pentamer vertices. Interacts with the large tegument protein/LTP.

The protein resides in the virion. The protein localises to the host nucleus. Its function is as follows. Capsid vertex-specific component that plays a role during viral DNA encapsidation, assuring correct genome cleavage and presumably stabilizing capsids that contain full-length viral genomes. Participates in the interaction between the capsid and the tegument through interaction with the large tegument protein/LTP. This chain is Capsid vertex component 2, found in Homo sapiens (Human).